A 713-amino-acid polypeptide reads, in one-letter code: DNA polymerase eta (713 aa).

A UmuC domain is found at Val-9–Gly-259. Mg(2+) is bound by residues Asp-13 and Met-14. Asp-13 and Met-14 together coordinate Mn(2+). Residue Arg-61 participates in a 2'-deoxyribonucleoside 5'-triphosphate binding. Mg(2+) contacts are provided by Asp-115 and Glu-116. Residues Asp-115 and Glu-116 each contribute to the Mn(2+) site. Disordered regions lie at residues Thr-441–Ala-472 and Glu-495–Gly-527. Polar residues-rich tracts occupy residues Val-456–Ser-466 and Ser-497–Gly-527. The segment at Ala-628–Ser-662 adopts a UBZ3-type zinc-finger fold. Zn(2+) is bound by residues Cys-635, Cys-638, His-650, and His-654. The tract at residues Val-677–Glu-705 is disordered. Glycyl lysine isopeptide (Lys-Gly) (interchain with G-Cter in ubiquitin) cross-links involve residues Lys-682, Lys-686, and Lys-694. The PIP-box signature appears at Met-701 to Phe-708. Lys-709 is covalently cross-linked (Glycyl lysine isopeptide (Lys-Gly) (interchain with G-Cter in ubiquitin)).

The protein belongs to the DNA polymerase type-Y family. In terms of assembly, interacts with REV1. Interacts with monoubiquitinated PCNA, but not unmodified PCNA. Interacts with POLI; this interaction targets POLI to the replication machinery. Interacts with PALB2 and BRCA2; the interactions are direct and are required to sustain the recruitment of POLH at blocked replication forks and to stimulate POLH-dependent DNA synthesis on D loop substrates. Interacts (via C-terminus) with TRAIP. Interacts with ubiquitin. Interacts with POLDIP2. Requires Mg(2+) as cofactor. Mn(2+) is required as a cofactor. Post-translationally, monoubiquitinated by RCHY1/PIRH2. Ubiquitination depends on integrity of the UBZ3-type zinc finger domain and is enhanced by TRAIP. Ubiquitination inhibits the ability of PolH to interact with PCNA and to bypass UV-induced lesions.

It is found in the nucleus. The enzyme catalyses DNA(n) + a 2'-deoxyribonucleoside 5'-triphosphate = DNA(n+1) + diphosphate. With respect to regulation, the enzyme in complex with the DNA substrate binds a third divalent metal cation. The binding of this third divalent cation, which is coordinated by water molecules and two oxygen atoms from DNA and dNTP, is essential for catalyzing the DNA synthesis. In terms of biological role, DNA polymerase specifically involved in the DNA repair by translesion synthesis (TLS). Due to low processivity on both damaged and normal DNA, cooperates with the heterotetrameric (REV3L, REV7, POLD2 and POLD3) POLZ complex for complete bypass of DNA lesions. Inserts one or 2 nucleotide(s) opposite the lesion, the primer is further extended by the tetrameric POLZ complex. In the case of 1,2-intrastrand d(GpG)-cisplatin cross-link, inserts dCTP opposite the 3' guanine. Particularly important for the repair of UV-induced pyrimidine dimers. Although inserts the correct base, may cause base transitions and transversions depending upon the context. May play a role in hypermutation at immunoglobulin genes. Forms a Schiff base with 5'-deoxyribose phosphate at abasic sites, but does not have any lyase activity, preventing the release of the 5'-deoxyribose phosphate (5'-dRP) residue. This covalent trapping of the enzyme by the 5'-dRP residue inhibits its DNA synthetic activity during base excision repair, thereby avoiding high incidence of mutagenesis. Targets POLI to replication foci. The sequence is that of DNA polymerase eta (POLH) from Homo sapiens (Human).